A 435-amino-acid chain; its full sequence is Shikimate O-hydroxycinnamoyltransferase (435 aa).

Catalysis depends on proton acceptor residues H153 and D382.

The protein belongs to the plant acyltransferase family. As to expression, highly expressed in stem vascular tissues.

The enzyme catalyses shikimate + 4-coumaroyl-CoA = trans-4-coumaroylshikimate + CoA. Functionally, acyltransferase involved in the biosynthesis of lignin. The affinity for shikimate as acceptor is 100-fold higher than for quinate. The most efficient donors are caffeoyl-CoA &gt; p-coumaroyl-CoA &gt; feruloyl-CoA &gt;&gt; sinapoyl-CoA. This is Shikimate O-hydroxycinnamoyltransferase (HST) from Nicotiana tabacum (Common tobacco).